Reading from the N-terminus, the 398-residue chain is Inositol polyphosphate 5-phosphatase (398 aa).

It belongs to the inositol 1,4,5-trisphosphate 5-phosphatase type II family. In terms of tissue distribution, expressed in tail, cilia, dendrites, axon and male head.

The protein resides in the cytoplasm. In terms of biological role, dephosphorylates a number of phosphatidylinositols. Controls the cellular levels and subcellular distribution of phosphatidylinositol 3,5-bisphosphate and phosphatidylinositol 3,4,5-trisphosphate. Has a role in sperm activation and motility. Influences the localization of the transient receptor potential polycystin (TRPP) complex proteins lov-1 and pkd-2. This Caenorhabditis elegans protein is Inositol polyphosphate 5-phosphatase.